We begin with the raw amino-acid sequence, 801 residues long: Cadherin-20 (801 aa).

A signal peptide spans 1-34 (MWTTGRMSNAKSWLGLGTSLYFWALMDLTATVLS). A propeptide spanning residues 35 to 59 (STPMPEVELETLFSGRSQSHQRSKR) is cleaved from the precursor. The Extracellular segment spans residues 60–619 (SWVWNQFFVL…AYLLPVSLSR (560 aa)). Cadherin domains lie at 61–165 (WVWN…EPKF), 166–274 (LDGP…PPRF), 275–389 (PQKH…PPVF), 390–494 (EPGF…APEF), and 494–610 (FPRF…SPEA). A glycan (N-linked (GlcNAc...) asparagine) is linked at asparagine 261. N-linked (GlcNAc...) asparagine glycosylation is found at asparagine 420, asparagine 461, and asparagine 542. Residues 620 to 640 (GALIAILACIFVLLVLVLLIL) form a helical membrane-spanning segment. The Cytoplasmic segment spans residues 641–801 (SMRRHRKQPY…GASEGPAPLW (161 aa)).

Expressed in brain. Highest level of expression in the retina. In embryo it is synthesized by the forebrain, anterior neural ridge, developing visual system, primitive external granular layer of the cerebellum and a subset of neural crest cells likely to develop into melanoblasts.

It is found in the cell membrane. Cadherins are calcium-dependent cell adhesion proteins. They preferentially interact with themselves in a homophilic manner in connecting cells; cadherins may thus contribute to the sorting of heterogeneous cell types. This Mus musculus (Mouse) protein is Cadherin-20 (Cdh20).